We begin with the raw amino-acid sequence, 220 residues long: Sec-independent protein translocase protein TatB (220 aa).

The helical transmembrane segment at 1 to 21 (MFDIGFSELLLVLVIGLVVLG) threads the bilayer. The interval 190–220 (VTKQQIDTIDSHGTDLSSAGPSRIHQPGGDQ) is disordered.

It belongs to the TatB family. The Tat system comprises two distinct complexes: a TatABC complex, containing multiple copies of TatA, TatB and TatC subunits, and a separate TatA complex, containing only TatA subunits. Substrates initially bind to the TatABC complex, which probably triggers association of the separate TatA complex to form the active translocon.

Its subcellular location is the cell inner membrane. In terms of biological role, part of the twin-arginine translocation (Tat) system that transports large folded proteins containing a characteristic twin-arginine motif in their signal peptide across membranes. Together with TatC, TatB is part of a receptor directly interacting with Tat signal peptides. TatB may form an oligomeric binding site that transiently accommodates folded Tat precursor proteins before their translocation. The chain is Sec-independent protein translocase protein TatB from Yersinia pseudotuberculosis serotype I (strain IP32953).